Here is a 290-residue protein sequence, read N- to C-terminus: uncharacterized protein (290 aa).

3 disordered regions span residues Cys-89–Ser-157, Met-172–Ser-217, and Thr-261–Lys-290. Basic and acidic residues-rich tracts occupy residues Asp-106–Pro-124 and Lys-142–Ser-152. Polar residues-rich tracts occupy residues Met-172–Gly-183 and Lys-193–Thr-202. Composition is skewed to low complexity over residues Met-207 to Ser-217 and Pro-274 to Lys-290.

This is an uncharacterized protein from Caenorhabditis elegans.